The chain runs to 103 residues: Mitochondrial import inner membrane translocase subunit Tim10 B (103 aa).

The Twin CX3C motif signature appears at 28 to 52; the sequence is CFQRCVPSLHHRALDAEEEACLHSC. Cystine bridges form between cysteine 28-cysteine 52 and cysteine 32-cysteine 48.

This sequence belongs to the small Tim family. As to quaternary structure, component of the TIM22 complex, which core is composed of TIMM22, associated with TIMM10 (TIMM10A and/or TIMM10B), TIMM9, AGK and TIMM29. Ubiquitous, with highest expression in heart, kidney, liver and skeletal muscle.

The protein resides in the mitochondrion inner membrane. Functionally, component of the TIM22 complex, a complex that mediates the import and insertion of multi-pass transmembrane proteins into the mitochondrial inner membrane. The TIM22 complex forms a twin-pore translocase that uses the membrane potential as the external driving force. In the TIM22 complex, it may act as a docking point for the soluble 70 kDa complex that guides the target proteins in transit through the aqueous mitochondrial intermembrane space. This Homo sapiens (Human) protein is Mitochondrial import inner membrane translocase subunit Tim10 B (TIMM10B).